The sequence spans 128 residues: Cytochrome c' (128 aa).

Gln13, Gln17, Glu69, Thr70, Cys118, Cys121, and His122 together coordinate heme c.

In terms of processing, binds 1 heme c group covalently per subunit.

In terms of biological role, cytochrome c' is the most widely occurring bacterial c-type cytochrome. Cytochromes c' are high-spin proteins and the heme has no sixth ligand. Their exact function is not known. The chain is Cytochrome c' from Magnetospirillum fulvum (Rhodospirillum fulvum).